Here is a 166-residue protein sequence, read N- to C-terminus: Large ribosomal subunit protein uL10 (166 aa).

It belongs to the universal ribosomal protein uL10 family. As to quaternary structure, part of the ribosomal stalk of the 50S ribosomal subunit. The N-terminus interacts with L11 and the large rRNA to form the base of the stalk. The C-terminus forms an elongated spine to which L12 dimers bind in a sequential fashion forming a multimeric L10(L12)X complex.

Functionally, forms part of the ribosomal stalk, playing a central role in the interaction of the ribosome with GTP-bound translation factors. This chain is Large ribosomal subunit protein uL10, found in Streptococcus agalactiae serotype V (strain ATCC BAA-611 / 2603 V/R).